Consider the following 712-residue polypeptide: Transcriptional regulator GZF3 (712 aa).

The segment covering 1 to 13 (MSMSDIQQRPQIP) has biased composition (polar residues). 5 disordered regions span residues 1-20 (MSMS…TAAV), 27-135 (NVNT…GPVC), 173-280 (SLKT…HHHL), 377-533 (DVSS…GNNF), and 596-712 (LNNN…KVKI). 2 stretches are compositionally biased toward low complexity: residues 27–84 (NVNT…EQSS) and 107–131 (PKTG…ISMS). The segment at 135–159 (CGNCQTQTTPLWRRDETGQVLCNAC) adopts a GATA-type zinc-finger fold. The span at 186–199 (KQNGSNSQSSKSSG) shows a compositional bias: low complexity. Residues 213–223 (GKKSPKSKKKS) show a composition bias toward basic residues. Polar residues predominate over residues 246–261 (ATSNNTPTFKSTTSQS). The span at 268–280 (NHHHQHHNHHHHL) shows a compositional bias: basic residues. Positions 379-414 (SSINGSSTSLSSSSASSSIFSSVAPSTSSSSSLSNG) are enriched in low complexity. 2 stretches are compositionally biased toward polar residues: residues 429–447 (SKIS…TPLQ) and 484–498 (QQSM…RSPI). 2 stretches are compositionally biased toward low complexity: residues 499-532 (NGNQ…NGNN) and 596-616 (LNNN…QPQQ). Residues 545 to 598 (TRISELELVNDLYRTRIMELEAMEQAARLRENSMKKRLDEVMNLQINYQNLLNN) adopt a coiled-coil conformation. Positions 631–667 (DQGSQSISPNVSITGSTTITSPNSRSKIISETTPTHH) are enriched in polar residues.

The protein resides in the nucleus. Probable transcription factor involved in response to fluconazole, LiCl, and copper. This chain is Transcriptional regulator GZF3 (GZF3), found in Candida albicans (strain SC5314 / ATCC MYA-2876) (Yeast).